Here is a 751-residue protein sequence, read N- to C-terminus: SKI family transcriptional corepressor 1 homolog-B (751 aa).

5 disordered regions span residues 1–30 (MESIPNQLPAGRDSSCSPNSKDLQSYSGPP), 234–267 (SRKRTLPIGRSESSPSQPPRGQTQGEPSDVPHKT), 386–434 (LDVS…GIPP), 459–569 (YGNR…HGNK), and 600–635 (QRETSVKDVHEEEPSSTVEEMEPKNHQDENNISEER). Composition is skewed to polar residues over residues 14–27 (SSCSPNSKDLQSYS) and 244–259 (SESSPSQPPRGQTQGE). Over residues 416–428 (RNEEDKSGDESRS) the composition is skewed to basic and acidic residues. Low complexity predominate over residues 479 to 491 (SESSSYRSVSPDV). Positions 539-558 (QENTQMHTLNDLHSTNSSET) are enriched in polar residues. 3 stretches are compositionally biased toward basic and acidic residues: residues 559–569 (RPSDMESHGNK), 603–612 (TSVKDVHEEE), and 620–635 (MEPKNHQDENNISEER). Residues 666 to 704 (SMAKEELQKQLVEQVELRKKLEREFQNLKDSFQDQMKRE) are a coiled coil.

This sequence belongs to the SKI family.

It is found in the nucleus. May inhibit BMP signaling. In Danio rerio (Zebrafish), this protein is SKI family transcriptional corepressor 1 homolog-B (skor1b).